The chain runs to 527 residues: UDP-glucuronosyltransferase 2A1 (527 aa).

Positions Met-1 to Gly-20 are cleaved as a signal peptide. Over Gly-21–Asp-490 the chain is Extracellular. Residue Asn-49 is glycosylated (N-linked (GlcNAc...) asparagine). Lys-134 carries the post-translational modification N6-succinyllysine. Asn-313 carries an N-linked (GlcNAc...) asparagine glycan. The chain crosses the membrane as a helical span at residues Val-491–Ile-507. Over Lys-508–Asp-527 the chain is Cytoplasmic.

Belongs to the UDP-glycosyltransferase family. Olfactory epithelium. Mainly found in the sustentacular cells and to a lesser extent in Bowman's gland cells. Also expressed in the olfactory sensory neuron nuclei. Neuronal localization within the olfactory bulb is mainly found in the deeper granular cells.

The protein resides in the membrane. It catalyses the reaction glucuronate acceptor + UDP-alpha-D-glucuronate = acceptor beta-D-glucuronoside + UDP + H(+). The catalysed reaction is 16beta,17beta-estriol + UDP-alpha-D-glucuronate = 16beta,17beta-estriol 16-O-(beta-D-glucuronate) + UDP + H(+). The enzyme catalyses 16alpha,17alpha-estriol + UDP-alpha-D-glucuronate = 16alpha,17alpha-estriol 16-O-(beta-D-glucuronate) + UDP + H(+). It carries out the reaction 17alpha-estradiol + UDP-alpha-D-glucuronate = 17alpha-estradiol 17-O-(beta-D-glucuronate) + UDP + H(+). It catalyses the reaction 17alpha-estradiol + UDP-alpha-D-glucuronate = 17alpha-estradiol 3-O-(beta-D-glucuronate) + UDP + H(+). The catalysed reaction is 17beta-estradiol + UDP-alpha-D-glucuronate = 17beta-estradiol 3-O-(beta-D-glucuronate) + UDP + H(+). The enzyme catalyses 17beta-estradiol + UDP-alpha-D-glucuronate = 17beta-estradiol 17-O-(beta-D-glucuronate) + UDP + H(+). It carries out the reaction testosterone + UDP-alpha-D-glucuronate = testosterone 17-O-(beta-D-glucuronate) + UDP + H(+). It catalyses the reaction epitestosterone + UDP-alpha-D-glucuronate = epitestosterone 17-O-(beta-D-glucuronate) + UDP + H(+). The catalysed reaction is lithocholate + UDP-alpha-D-glucuronate = lithocholoyl-3-O-(beta-D-glucuronate) + UDP + H(+). The enzyme catalyses lithocholate + UDP-alpha-D-glucuronate = lithocholoyl-24-O-(beta-D-glucuronate) + UDP. It carries out the reaction deoxycholate + UDP-alpha-D-glucuronate = deoxycholoyl-24-O-(beta-D-glucuronate) + UDP. It catalyses the reaction hyodeoxycholate + UDP-alpha-D-glucuronate = hyodeoxycholate 6-O-(beta-D-glucuronate) + UDP + H(+). The catalysed reaction is hyocholate + UDP-alpha-D-glucuronate = hyocholoyl-24-O-(beta-D-glucuronate) + UDP. Functionally, UDP-glucuronosyltransferase (UGT) that catalyzes phase II biotransformation reactions in which lipophilic substrates are conjugated with glucuronic acid to increase the metabolite's water solubility, thereby facilitating excretion into either the urine or bile. Essential for the elimination and detoxification of drugs, xenobiotics and endogenous compounds. Catalyzes the glucuronidation of endogenous steroid hormones such as androgens (testosterones) and estrogens (estradiol and estriol). Contributes to bile acid (BA) detoxification by catalyzing the glucuronidation of BA substrates, which are natural detergents for dietary lipids absorption. Shows a high affinity to aliphatic odorants such as citronellol as well as olfactory tissue specificity, and therefore may be involved in olfaction. The polypeptide is UDP-glucuronosyltransferase 2A1 (Rattus norvegicus (Rat)).